Reading from the N-terminus, the 148-residue chain is Trypsin inhibitor CMe (148 aa).

An N-terminal signal peptide occupies residues 1–24; sequence MAFKYQLLLSAAVMLAILVATATS.

Belongs to the protease inhibitor I6 (cereal trypsin/alpha-amylase inhibitor) family. Post-translationally, five disulfide bonds, which are essential for the inhibitor activity, are probably present. In terms of tissue distribution, expressed in the developing endosperm. Not detected in embryo, aleurone, coleoptile, roots and leaves.

It is found in the secreted. Inhibits trypsin in vitro. Probably plays a protective role through inhibition of insect midgut proteases. The chain is Trypsin inhibitor CMe (ITR1) from Hordeum vulgare (Barley).